The sequence spans 127 residues: Major sperm protein isoform alpha (127 aa).

A2 is subject to N-acetylalanine. The MSP domain occupies 9–126 (DINTQPSQKI…RRKNLPIEYN (118 aa)).

Forms filaments 10 nm wide, with a characteristic substructure repeating axially at 9 nm. Sperm.

The protein localises to the cell projection. It is found in the pseudopodium. Its subcellular location is the cytoplasm. The protein resides in the cytoskeleton. In terms of biological role, central component in molecular interactions underlying sperm crawling. Forms an extensive filament system that extends from sperm villipoda, along the leading edge of the pseudopod. The protein is Major sperm protein isoform alpha of Ascaris suum (Pig roundworm).